The chain runs to 377 residues: Nitric oxide reductase FlRd-NAD(+) reductase (377 aa).

The protein belongs to the FAD-dependent oxidoreductase family. FAD is required as a cofactor.

It localises to the cytoplasm. The enzyme catalyses 2 reduced [nitric oxide reductase rubredoxin domain] + NAD(+) + H(+) = 2 oxidized [nitric oxide reductase rubredoxin domain] + NADH. Its pathway is nitrogen metabolism; nitric oxide reduction. Its function is as follows. One of at least two accessory proteins for anaerobic nitric oxide (NO) reductase. Reduces the rubredoxin moiety of NO reductase. This chain is Nitric oxide reductase FlRd-NAD(+) reductase, found in Salmonella heidelberg (strain SL476).